The sequence spans 240 residues: Thiopurine S-methyltransferase (240 aa).

24–35 (WKEKWVTRHISF) is a binding site for S-adenosyl-L-methionine. The residue at position 34 (Ser34) is a Phosphoserine. Phe35 provides a ligand contact to substrate. Lys53 is modified (N6-acetyllysine). S-adenosyl-L-methionine is bound by residues Leu64, Glu85, 129 to 130 (SI), and Arg147.

Belongs to the class I-like SAM-binding methyltransferase superfamily. TPMT family. In terms of assembly, monomer.

The protein localises to the cytoplasm. It catalyses the reaction S-adenosyl-L-methionine + a thiopurine = S-adenosyl-L-homocysteine + a thiopurine S-methylether.. It carries out the reaction mercaptopurine + S-adenosyl-L-methionine = 6-methylthiopurine + S-adenosyl-L-homocysteine + H(+). Catalyzes the S-methylation of thiopurine drugs such as 6-mercaptopurine (also called mercaptopurine, 6-MP or its brand name Purinethol) using S-adenosyl-L-methionine as the methyl donor. TPMT activity modulates the cytotoxic effects of thiopurine prodrugs. A natural substrate for this enzyme has yet to be identified. The protein is Thiopurine S-methyltransferase (Tpmt) of Mus musculus (Mouse).